We begin with the raw amino-acid sequence, 431 residues long: Glutamate-1-semialdehyde 2,1-aminomutase (431 aa).

Lysine 265 carries the N6-(pyridoxal phosphate)lysine modification.

This sequence belongs to the class-III pyridoxal-phosphate-dependent aminotransferase family. HemL subfamily. In terms of assembly, homodimer. Pyridoxal 5'-phosphate is required as a cofactor.

The protein resides in the cytoplasm. The catalysed reaction is (S)-4-amino-5-oxopentanoate = 5-aminolevulinate. It participates in porphyrin-containing compound metabolism; protoporphyrin-IX biosynthesis; 5-aminolevulinate from L-glutamyl-tRNA(Glu): step 2/2. The chain is Glutamate-1-semialdehyde 2,1-aminomutase from Vibrio atlanticus (strain LGP32) (Vibrio splendidus (strain Mel32)).